The chain runs to 126 residues: Large ribosomal subunit protein uL14 (126 aa).

The protein belongs to the universal ribosomal protein uL14 family. As to quaternary structure, part of the 50S ribosomal subunit. Forms a cluster with proteins L3 and L19. In the 70S ribosome, L14 and L19 interact and together make contacts with the 16S rRNA in bridges B5 and B8.

Binds to 23S rRNA. Forms part of two intersubunit bridges in the 70S ribosome. This is Large ribosomal subunit protein uL14 from Persephonella marina (strain DSM 14350 / EX-H1).